We begin with the raw amino-acid sequence, 548 residues long: MDSQRNLLIIALLFVSFMIWQAWEQDKNPQPQQQTTQTTTTAAGSAADQGVPASGQGKLITVKTDVLELTINTNGGDIEQALLLAYPKTLKSTEPFQLLETTPQFVYQAQSGLTGRDGPDNPANGPRPLYNVDKEAFVLADGQDELVIPLTYTDKAGNVFTKTFTLKRGGYAVNVGYSVQNASEKPLEVSTFGQLKQTAALPTSRDTQTGGLSTMHTFRGAAFSTADSKYEKYKFDTILDNENLNVSTKNGWVAMLQQYFTTAWVPRNNGTNNFYTANLGNGVVAIGYKSQPVLVQPGQTDKLQSTLWVGPAIQDKMAAVAPHLDLTVDYGWLWFISQPLFKLLKFIHSFLGNWGFSIIVITFIVRGIMYPLTKAQYTSMAKMRMLQPKIQAMRERLGDDKQRQSQEMMALYKAEKVNPLGGCFPLIIQMPIFLALYYMLSASVELRHAPFILWIHDLSAQDPYYILPIIMGATMFFIQKMSPTTVTDPMQQKIMTFMPVIFTVFFLWFPSGLVVYYIVSNLVTIIQQQLIYRGLEKRGLHSREKKKS.

Residues 6 to 26 (NLLIIALLFVSFMIWQAWEQD) form a helical membrane-spanning segment. The interval 28–52 (NPQPQQQTTQTTTTAAGSAADQGVP) is disordered. Residues 29 to 41 (PQPQQQTTQTTTT) show a composition bias toward low complexity. The next 4 helical transmembrane spans lie at 345 to 365 (KFIHSFLGNWGFSIIVITFIV), 420 to 440 (LGGCFPLIIQMPIFLALYYML), 458 to 478 (LSAQDPYYILPIIMGATMFFI), and 499 to 519 (PVIFTVFFLWFPSGLVVYYIV).

This sequence belongs to the OXA1/ALB3/YidC family. Type 1 subfamily. As to quaternary structure, interacts with the Sec translocase complex via SecD. Specifically interacts with transmembrane segments of nascent integral membrane proteins during membrane integration.

Its subcellular location is the cell inner membrane. Required for the insertion and/or proper folding and/or complex formation of integral membrane proteins into the membrane. Involved in integration of membrane proteins that insert both dependently and independently of the Sec translocase complex, as well as at least some lipoproteins. Aids folding of multispanning membrane proteins. The chain is Membrane protein insertase YidC from Klebsiella pneumoniae subsp. pneumoniae (strain ATCC 700721 / MGH 78578).